We begin with the raw amino-acid sequence, 263 residues long: Acetylglutamate kinase (263 aa).

Substrate is bound by residues 48-49 (GG), R70, and N162.

The protein belongs to the acetylglutamate kinase family. ArgB subfamily.

It localises to the cytoplasm. It carries out the reaction N-acetyl-L-glutamate + ATP = N-acetyl-L-glutamyl 5-phosphate + ADP. It functions in the pathway amino-acid biosynthesis; L-arginine biosynthesis; N(2)-acetyl-L-ornithine from L-glutamate: step 2/4. Catalyzes the ATP-dependent phosphorylation of N-acetyl-L-glutamate. This chain is Acetylglutamate kinase, found in Shewanella sediminis (strain HAW-EB3).